A 312-amino-acid chain; its full sequence is R2-like ligand binding oxidase (312 aa).

Residues Glu-68, Glu-101, and His-104 each coordinate Mn(2+). The segment at residues 71 to 162 (VTQDIQPFMA…AAQVRASVTY (92 aa)) is a cross-link (3-(O4'-tyrosyl)-valine (Val-Tyr)). Glu-101 lines the Fe cation pocket. 3 residues coordinate Fe cation: Glu-167, Glu-202, and His-205.

Belongs to the ribonucleoside diphosphate reductase small chain family. R2-like ligand binding oxidase subfamily. Homodimer. The cofactor is Fe cation. Mn(2+) serves as cofactor.

In terms of biological role, probable oxidase that might be involved in lipid metabolism. This is R2-like ligand binding oxidase from Mycolicibacterium vanbaalenii (strain DSM 7251 / JCM 13017 / BCRC 16820 / KCTC 9966 / NRRL B-24157 / PYR-1) (Mycobacterium vanbaalenii).